Reading from the N-terminus, the 777-residue chain is Endonuclease MutS2 (777 aa).

328–335 contributes to the ATP binding site; it reads GPNTGGKT. Residues 702–777 enclose the Smr domain; sequence LDIRGMNTLE…GDGATEVYLK (76 aa).

It belongs to the DNA mismatch repair MutS family. MutS2 subfamily. As to quaternary structure, homodimer. Binds to stalled ribosomes, contacting rRNA.

Its function is as follows. Endonuclease that is involved in the suppression of homologous recombination and thus may have a key role in the control of bacterial genetic diversity. Acts as a ribosome collision sensor, splitting the ribosome into its 2 subunits. Detects stalled/collided 70S ribosomes which it binds and splits by an ATP-hydrolysis driven conformational change. Acts upstream of the ribosome quality control system (RQC), a ribosome-associated complex that mediates the extraction of incompletely synthesized nascent chains from stalled ribosomes and their subsequent degradation. Probably generates substrates for RQC. The sequence is that of Endonuclease MutS2 from Carboxydothermus hydrogenoformans (strain ATCC BAA-161 / DSM 6008 / Z-2901).